Here is a 417-residue protein sequence, read N- to C-terminus: Serine hydroxymethyltransferase 3 (417 aa).

(6S)-5,6,7,8-tetrahydrofolate is bound by residues Leu-121 and 125–127; that span reads GHL. N6-(pyridoxal phosphate)lysine is present on Lys-230. 355–357 is a (6S)-5,6,7,8-tetrahydrofolate binding site; it reads SPF.

It belongs to the SHMT family. As to quaternary structure, homodimer. The cofactor is pyridoxal 5'-phosphate.

It localises to the cytoplasm. The enzyme catalyses (6R)-5,10-methylene-5,6,7,8-tetrahydrofolate + glycine + H2O = (6S)-5,6,7,8-tetrahydrofolate + L-serine. It participates in one-carbon metabolism; tetrahydrofolate interconversion. Its pathway is amino-acid biosynthesis; glycine biosynthesis; glycine from L-serine: step 1/1. In terms of biological role, catalyzes the reversible interconversion of serine and glycine with tetrahydrofolate (THF) serving as the one-carbon carrier. This reaction serves as the major source of one-carbon groups required for the biosynthesis of purines, thymidylate, methionine, and other important biomolecules. Also exhibits THF-independent aldolase activity toward beta-hydroxyamino acids, producing glycine and aldehydes, via a retro-aldol mechanism. The polypeptide is Serine hydroxymethyltransferase 3 (Pseudomonas fluorescens (strain Pf0-1)).